The sequence spans 165 residues: ATP synthase subunit b (165 aa).

A helical transmembrane segment spans residues Leu5–Leu25.

It belongs to the ATPase B chain family. F-type ATPases have 2 components, F(1) - the catalytic core - and F(0) - the membrane proton channel. F(1) has five subunits: alpha(3), beta(3), gamma(1), delta(1), epsilon(1). F(0) has three main subunits: a(1), b(2) and c(10-14). The alpha and beta chains form an alternating ring which encloses part of the gamma chain. F(1) is attached to F(0) by a central stalk formed by the gamma and epsilon chains, while a peripheral stalk is formed by the delta and b chains.

Its subcellular location is the cell membrane. In terms of biological role, f(1)F(0) ATP synthase produces ATP from ADP in the presence of a proton or sodium gradient. F-type ATPases consist of two structural domains, F(1) containing the extramembraneous catalytic core and F(0) containing the membrane proton channel, linked together by a central stalk and a peripheral stalk. During catalysis, ATP synthesis in the catalytic domain of F(1) is coupled via a rotary mechanism of the central stalk subunits to proton translocation. Functionally, component of the F(0) channel, it forms part of the peripheral stalk, linking F(1) to F(0). The polypeptide is ATP synthase subunit b (Clostridioides difficile (strain 630) (Peptoclostridium difficile)).